The chain runs to 218 residues: Protein GrpE (218 aa).

Composition is skewed to basic and acidic residues over residues Met-1–Asn-13 and Val-20–Glu-32. The disordered stretch occupies residues Met-1 to Glu-32.

The protein belongs to the GrpE family. In terms of assembly, homodimer.

It localises to the cytoplasm. Functionally, participates actively in the response to hyperosmotic and heat shock by preventing the aggregation of stress-denatured proteins, in association with DnaK and GrpE. It is the nucleotide exchange factor for DnaK and may function as a thermosensor. Unfolded proteins bind initially to DnaJ; upon interaction with the DnaJ-bound protein, DnaK hydrolyzes its bound ATP, resulting in the formation of a stable complex. GrpE releases ADP from DnaK; ATP binding to DnaK triggers the release of the substrate protein, thus completing the reaction cycle. Several rounds of ATP-dependent interactions between DnaJ, DnaK and GrpE are required for fully efficient folding. The polypeptide is Protein GrpE (Ureaplasma parvum serovar 3 (strain ATCC 27815 / 27 / NCTC 11736)).